The primary structure comprises 688 residues: Elongation factor G (688 aa).

The region spanning 8 to 282 (EKTRNIGIIA…AVVDYLPAPC (275 aa)) is the tr-type G domain. GTP-binding positions include 17–24 (AHIDAGKT), 81–85 (DTPGH), and 135–138 (NKMD).

This sequence belongs to the TRAFAC class translation factor GTPase superfamily. Classic translation factor GTPase family. EF-G/EF-2 subfamily.

The protein localises to the cytoplasm. In terms of biological role, catalyzes the GTP-dependent ribosomal translocation step during translation elongation. During this step, the ribosome changes from the pre-translocational (PRE) to the post-translocational (POST) state as the newly formed A-site-bound peptidyl-tRNA and P-site-bound deacylated tRNA move to the P and E sites, respectively. Catalyzes the coordinated movement of the two tRNA molecules, the mRNA and conformational changes in the ribosome. In Aster yellows witches'-broom phytoplasma (strain AYWB), this protein is Elongation factor G.